Consider the following 249-residue polypeptide: Small ribosomal subunit protein eS6 (249 aa).

A compositionally biased stretch (basic residues) spans 223-238 (LRQRDHSKKHTQKVHA). Residues 223–249 (LRQRDHSKKHTQKVHAQRAEVAAFQKK) form a disordered region.

Belongs to the eukaryotic ribosomal protein eS6 family. As to quaternary structure, component of the small ribosomal subunit. Part of the small subunit (SSU) processome, composed of more than 70 proteins and the RNA chaperone small nucleolar RNA (snoRNA) U3. In terms of processing, ribosomal protein S6 is the major substrate of protein kinases in eukaryote ribosomes.

It localises to the cytoplasm. It is found in the nucleus. The protein localises to the nucleolus. Component of the 40S small ribosomal subunit. Plays an important role in controlling cell growth and proliferation through the selective translation of particular classes of mRNA. Part of the small subunit (SSU) processome, first precursor of the small eukaryotic ribosomal subunit. During the assembly of the SSU processome in the nucleolus, many ribosome biogenesis factors, an RNA chaperone and ribosomal proteins associate with the nascent pre-rRNA and work in concert to generate RNA folding, modifications, rearrangements and cleavage as well as targeted degradation of pre-ribosomal RNA by the RNA exosome. This chain is Small ribosomal subunit protein eS6 (RPS6), found in Leishmania infantum.